We begin with the raw amino-acid sequence, 106 residues long: Large ribosomal subunit protein uL24 (106 aa).

Belongs to the universal ribosomal protein uL24 family. As to quaternary structure, part of the 50S ribosomal subunit.

Functionally, one of two assembly initiator proteins, it binds directly to the 5'-end of the 23S rRNA, where it nucleates assembly of the 50S subunit. Its function is as follows. One of the proteins that surrounds the polypeptide exit tunnel on the outside of the subunit. The sequence is that of Large ribosomal subunit protein uL24 from Thermosipho melanesiensis (strain DSM 12029 / CIP 104789 / BI429).